A 94-amino-acid polypeptide reads, in one-letter code: Small ribosomal subunit protein uS19 (94 aa).

A disordered region spans residues 73–94 (EFAPTRTYRGHGKDAERTTRRR). Basic and acidic residues predominate over residues 83 to 94 (HGKDAERTTRRR).

The protein belongs to the universal ribosomal protein uS19 family.

In terms of biological role, protein S19 forms a complex with S13 that binds strongly to the 16S ribosomal RNA. In Thermomicrobium roseum (strain ATCC 27502 / DSM 5159 / P-2), this protein is Small ribosomal subunit protein uS19.